The sequence spans 146 residues: Hemoglobin subunit beta-2 (146 aa).

The 145-residue stretch at 2-146 folds into the Globin domain; it reads EWTDFERATI…VVSALGRQYH (145 aa). The heme b site is built by His-63 and His-92.

The protein belongs to the globin family. In terms of assembly, hb3 is a heterotetramer of two alpha-2 chains and two beta-2 chains. Red blood cells.

Its function is as follows. Involved in oxygen transport from gills to the various peripheral tissues. This is Hemoglobin subunit beta-2 (hbb2) from Anarhichas minor (Arctic spotted wolffish).